The chain runs to 230 residues: uncharacterized protein (230 aa).

A helical transmembrane segment spans residues 19-39 (GIFQVLLQLVLAMMTVWDFAG). Asn-41 carries an N-linked (GlcNAc...) asparagine; by host glycan. The helical transmembrane segment at 55–75 (SFLLVLYTGLKQILEYMFSIC) threads the bilayer. N-linked (GlcNAc...) asparagine; by host glycosylation is found at Asn-86, Asn-157, Asn-168, and Asn-182. Positions 172-196 (TNLHKYQNDENDTEEDSEDIEKNSD) form a coiled coil. The interval 178 to 205 (QNDENDTEEDSEDIEKNSDPKENSDIDS) is disordered. A compositionally biased stretch (acidic residues) spans 180–190 (DENDTEEDSED). The span at 191 to 201 (IEKNSDPKENS) shows a compositional bias: basic and acidic residues.

The protein resides in the membrane. This is an uncharacterized protein from Acanthamoeba polyphaga mimivirus (APMV).